The following is a 397-amino-acid chain: Digeranylgeranylglycerophospholipid reductase 3 (397 aa).

Ala16, Asp35, Cys46, Ala47, Gly49, Arg102, Ala126, Asp283, Gly295, and Ile296 together coordinate FAD. Lys338 is a binding site for a 2,3-bis-O-(geranylgeranyl)-sn-glycerol 1-phospholipid.

This sequence belongs to the geranylgeranyl reductase family. DGGGPL reductase subfamily. The cofactor is FAD.

The catalysed reaction is a 2,3-bis-O-phytanyl-sn-glycerol 1-phospholipid + 8 A = a 2,3-bis-O-(geranylgeranyl)-sn-glycerol 1-phospholipid + 8 AH2. It catalyses the reaction 2,3-bis-O-(phytanyl)-sn-glycerol 1-phosphate + 8 A = 2,3-bis-O-(geranylgeranyl)-sn-glycerol 1-phosphate + 8 AH2. It carries out the reaction CDP-2,3-bis-O-(geranylgeranyl)-sn-glycerol + 8 AH2 = CDP-2,3-bis-O-(phytanyl)-sn-glycerol + 8 A. The enzyme catalyses archaetidylserine + 8 AH2 = 2,3-bis-O-phytanyl-sn-glycero-3-phospho-L-serine + 8 A. Its pathway is membrane lipid metabolism; glycerophospholipid metabolism. In terms of biological role, is involved in the reduction of 2,3-digeranylgeranylglycerophospholipids (unsaturated archaeols) into 2,3-diphytanylglycerophospholipids (saturated archaeols) in the biosynthesis of archaeal membrane lipids. Catalyzes the formation of archaetidic acid (2,3-di-O-phytanyl-sn-glyceryl phosphate) from 2,3-di-O-geranylgeranylglyceryl phosphate (DGGGP) via the hydrogenation of each double bond of the isoprenoid chains. Is also probably able to reduce double bonds of geranyl groups in CDP-2,3-bis-O-(geranylgeranyl)-sn-glycerol and archaetidylserine, thus acting at various stages in the biosynthesis of archaeal membrane lipids. The sequence is that of Digeranylgeranylglycerophospholipid reductase 3 from Methanosphaera stadtmanae (strain ATCC 43021 / DSM 3091 / JCM 11832 / MCB-3).